Here is a 406-residue protein sequence, read N- to C-terminus: MQTLANPSKTPINQAVFDTTIHRRKTRSVKVGDITIGGGHPVVVQSMINEDTLDIERSVAAIRRLHEIGCEIVRVTVPSIAHAKSLGEIKQKLAETYKPVPLVADVHHNGMKIALEVAKQVDKVRINPGLYVFEKPQAERNEYTQAEFEEIGDKIRQTLKPLVVSLRDQNKAMRIGVNHGSLSERMLFTYGDTPEGMVESALEFIKICESLKYYNLVISLKASRVPVMLAAYRLMVKRMDELGMPYPLHLGVTEAGDGDYGRVKSTAGIGTLLAEGIGDTIRVSLTEAPEKEIPVCYSILQALGLRKTMVEYVACPSCGRTLFNLENVLHEVREATKHLTGLDIAVMGCIVNGPGEMADADYGYVGKQSGYISLYRGREEIKKVHESQGVEELINLIKADGRWVEP.

Cysteine 315, cysteine 318, cysteine 349, and glutamate 356 together coordinate [4Fe-4S] cluster.

This sequence belongs to the IspG family. It depends on [4Fe-4S] cluster as a cofactor.

The catalysed reaction is (2E)-4-hydroxy-3-methylbut-2-enyl diphosphate + 2 oxidized [2Fe-2S]-[ferredoxin] + H2O = 2-C-methyl-D-erythritol 2,4-cyclic diphosphate + 2 reduced [2Fe-2S]-[ferredoxin] + H(+). Its pathway is isoprenoid biosynthesis; isopentenyl diphosphate biosynthesis via DXP pathway; isopentenyl diphosphate from 1-deoxy-D-xylulose 5-phosphate: step 5/6. Functionally, converts 2C-methyl-D-erythritol 2,4-cyclodiphosphate (ME-2,4cPP) into 1-hydroxy-2-methyl-2-(E)-butenyl 4-diphosphate. In Trichodesmium erythraeum (strain IMS101), this protein is 4-hydroxy-3-methylbut-2-en-1-yl diphosphate synthase (ferredoxin).